Here is a 161-residue protein sequence, read N- to C-terminus: Transcription elongation factor GreA (161 aa).

Residues 43–68 (SENAEYEAAREKQAFVEARIKHLEDI) adopt a coiled-coil conformation.

It belongs to the GreA/GreB family.

Necessary for efficient RNA polymerase transcription elongation past template-encoded arresting sites. The arresting sites in DNA have the property of trapping a certain fraction of elongating RNA polymerases that pass through, resulting in locked ternary complexes. Cleavage of the nascent transcript by cleavage factors such as GreA or GreB allows the resumption of elongation from the new 3'terminus. GreA releases sequences of 2 to 3 nucleotides. The chain is Transcription elongation factor GreA from Rickettsia bellii (strain OSU 85-389).